We begin with the raw amino-acid sequence, 334 residues long: Homoserine O-acetyltransferase (334 aa).

In terms of domain architecture, AB hydrolase-1 spans 61-318 (LVLHALTGDS…GSIHGHDAFL (258 aa)). Ser148 (nucleophile) is an active-site residue. Residue Arg205 coordinates substrate. Residues Asp285 and His314 contribute to the active site. A substrate-binding site is contributed by Asp315.

Belongs to the AB hydrolase superfamily. MetX family. In terms of assembly, homodimer.

The protein resides in the cytoplasm. It catalyses the reaction L-homoserine + acetyl-CoA = O-acetyl-L-homoserine + CoA. It participates in amino-acid biosynthesis; L-methionine biosynthesis via de novo pathway; O-acetyl-L-homoserine from L-homoserine: step 1/1. Transfers an acetyl group from acetyl-CoA to L-homoserine, forming acetyl-L-homoserine. In Deinococcus radiodurans (strain ATCC 13939 / DSM 20539 / JCM 16871 / CCUG 27074 / LMG 4051 / NBRC 15346 / NCIMB 9279 / VKM B-1422 / R1), this protein is Homoserine O-acetyltransferase.